A 182-amino-acid polypeptide reads, in one-letter code: MIEDILEEAEESMKKSINHFKSELAGFRTGRASTSLVEDIKIEYYGSRVPIKQVGNVSVPEPNQILIQVWDQNAISPIEKAIMEQLSLNPARQGNTLRITLPPLTQERRKELVKLLHKTTEEAKVAIRNIRRDAKEMIESLEGISEDEIKRALDKLQKITDHYIDEISNLSSSKEKEITELK.

This sequence belongs to the RRF family.

The protein localises to the cytoplasm. In terms of biological role, responsible for the release of ribosomes from messenger RNA at the termination of protein biosynthesis. May increase the efficiency of translation by recycling ribosomes from one round of translation to another. In Hydrogenobaculum sp. (strain Y04AAS1), this protein is Ribosome-recycling factor.